The following is a 635-amino-acid chain: Threonine--tRNA ligase (635 aa).

A TGS domain is found at methionine 1–threonine 61. A catalytic region spans residues aspartate 242–proline 532. Zn(2+) contacts are provided by cysteine 333, histidine 384, and histidine 509.

This sequence belongs to the class-II aminoacyl-tRNA synthetase family. In terms of assembly, homodimer. Zn(2+) is required as a cofactor.

The protein localises to the cytoplasm. The enzyme catalyses tRNA(Thr) + L-threonine + ATP = L-threonyl-tRNA(Thr) + AMP + diphosphate + H(+). Functionally, catalyzes the attachment of threonine to tRNA(Thr) in a two-step reaction: L-threonine is first activated by ATP to form Thr-AMP and then transferred to the acceptor end of tRNA(Thr). Also edits incorrectly charged L-seryl-tRNA(Thr). The sequence is that of Threonine--tRNA ligase from Clostridium botulinum (strain Loch Maree / Type A3).